The primary structure comprises 311 residues: Malate dehydrogenase (311 aa).

NAD(+) is bound by residues 7–13 and Asp-34; that span reads GAAGGIG. Positions 81 and 87 each coordinate substrate. Residues Asn-94 and 117 to 119 contribute to the NAD(+) site; that span reads ITN. Asn-119 and Arg-153 together coordinate substrate. His-177 acts as the Proton acceptor in catalysis. Residue Met-227 coordinates NAD(+).

This sequence belongs to the LDH/MDH superfamily. MDH type 1 family. Homodimer.

The enzyme catalyses (S)-malate + NAD(+) = oxaloacetate + NADH + H(+). Functionally, catalyzes the reversible oxidation of malate to oxaloacetate. This is Malate dehydrogenase from Histophilus somni (strain 2336) (Haemophilus somnus).